The chain runs to 300 residues: Acetylglutamate kinase (300 aa).

Substrate is bound by residues 68–69 (GG), arginine 90, and asparagine 195.

It belongs to the acetylglutamate kinase family. ArgB subfamily.

It localises to the cytoplasm. The enzyme catalyses N-acetyl-L-glutamate + ATP = N-acetyl-L-glutamyl 5-phosphate + ADP. It functions in the pathway amino-acid biosynthesis; L-arginine biosynthesis; N(2)-acetyl-L-ornithine from L-glutamate: step 2/4. Functionally, catalyzes the ATP-dependent phosphorylation of N-acetyl-L-glutamate. In Halorhodospira halophila (strain DSM 244 / SL1) (Ectothiorhodospira halophila (strain DSM 244 / SL1)), this protein is Acetylglutamate kinase.